The following is a 797-amino-acid chain: Probable exo-1,4-beta-xylosidase xlnD (797 aa).

The signal sequence occupies residues Met1 to Gly20. Asn23, Asn87, Asn142, and Asn237 each carry an N-linked (GlcNAc...) asparagine glycan. The active site involves Asp310. N-linked (GlcNAc...) asparagine glycans are attached at residues Asn326, Asn391, Asn404, Asn442, Asn479, Asn521, Asn617, Asn644, Asn657, Asn684, and Asn706.

It belongs to the glycosyl hydrolase 3 family.

The protein localises to the secreted. It carries out the reaction Hydrolysis of (1-&gt;4)-beta-D-xylans, to remove successive D-xylose residues from the non-reducing termini.. Its pathway is glycan degradation; xylan degradation. Xylan 1,4-beta-xylosidase involved in the hydrolysis of xylan, a major structural heterogeneous polysaccharide found in plant biomass representing the second most abundant polysaccharide in the biosphere, after cellulose. This Aspergillus flavus (strain ATCC 200026 / FGSC A1120 / IAM 13836 / NRRL 3357 / JCM 12722 / SRRC 167) protein is Probable exo-1,4-beta-xylosidase xlnD (xlnD).